A 77-amino-acid polypeptide reads, in one-letter code: Putative Fis-like DNA-binding protein (77 aa).

The segment at residues 53 to 72 (QSLAADYLGINRNTLRKKLQ) is a DNA-binding region (H-T-H motif).

The protein belongs to the transcriptional regulatory Fis family.

This chain is Putative Fis-like DNA-binding protein, found in Ralstonia nicotianae (strain ATCC BAA-1114 / GMI1000) (Ralstonia solanacearum).